The sequence spans 441 residues: tRNA modification GTPase MnmE (441 aa).

(6S)-5-formyl-5,6,7,8-tetrahydrofolate is bound by residues Arg-21, Glu-79, and Lys-118. In terms of domain architecture, TrmE-type G spans 214–370 (GFKIAIVGKP…LEGYLKTQDT (157 aa)). GTP contacts are provided by residues 224–229 (NVGKSS), 243–249 (SDEAGTT), and 268–271 (DTAG). Mg(2+)-binding residues include Ser-228 and Thr-249. Lys-441 is a (6S)-5-formyl-5,6,7,8-tetrahydrofolate binding site.

The protein belongs to the TRAFAC class TrmE-Era-EngA-EngB-Septin-like GTPase superfamily. TrmE GTPase family. In terms of assembly, homodimer. Heterotetramer of two MnmE and two MnmG subunits. K(+) serves as cofactor.

The protein localises to the cytoplasm. Functionally, exhibits a very high intrinsic GTPase hydrolysis rate. Involved in the addition of a carboxymethylaminomethyl (cmnm) group at the wobble position (U34) of certain tRNAs, forming tRNA-cmnm(5)s(2)U34. The protein is tRNA modification GTPase MnmE of Campylobacter concisus (strain 13826).